Here is a 440-residue protein sequence, read N- to C-terminus: 3-phosphoshikimate 1-carboxyvinyltransferase (440 aa).

3-phosphoshikimate contacts are provided by lysine 31, serine 32, and arginine 36. Lysine 31 provides a ligand contact to phosphoenolpyruvate. 2 residues coordinate phosphoenolpyruvate: glycine 104 and arginine 133. 3-phosphoshikimate is bound by residues serine 178, glutamine 180, aspartate 328, and lysine 355. Glutamine 180 is a phosphoenolpyruvate binding site. Aspartate 328 functions as the Proton acceptor in the catalytic mechanism. Residues arginine 359 and arginine 401 each contribute to the phosphoenolpyruvate site.

Belongs to the EPSP synthase family. As to quaternary structure, monomer.

It localises to the cytoplasm. The catalysed reaction is 3-phosphoshikimate + phosphoenolpyruvate = 5-O-(1-carboxyvinyl)-3-phosphoshikimate + phosphate. It participates in metabolic intermediate biosynthesis; chorismate biosynthesis; chorismate from D-erythrose 4-phosphate and phosphoenolpyruvate: step 6/7. Its function is as follows. Catalyzes the transfer of the enolpyruvyl moiety of phosphoenolpyruvate (PEP) to the 5-hydroxyl of shikimate-3-phosphate (S3P) to produce enolpyruvyl shikimate-3-phosphate and inorganic phosphate. The polypeptide is 3-phosphoshikimate 1-carboxyvinyltransferase (Thermosynechococcus vestitus (strain NIES-2133 / IAM M-273 / BP-1)).